Reading from the N-terminus, the 1403-residue chain is Protein FAM135B (1403 aa).

4 disordered regions span residues 445–483, 514–548, 648–669, and 718–740; these read EKNLINQNSSSRKDIPLSTTEAPQLGSDEDVTRRPEVQE, EDECWTGPRPDAVKDSLTDTDICSRSPGPDEGQTP, REALDTKPSQPDHAEEPEDLSA, and RHAHHRNSLEGGHTESNTSLPSG. Basic and acidic residues predominate over residues 649-661; that stretch reads EALDTKPSQPDHA. A compositionally biased stretch (polar residues) spans 731–740; that stretch reads TESNTSLPSG. Residues Ser775 and Ser776 each carry the phosphoserine modification. Residues 790-819 are disordered; the sequence is TAGFSEDLDPSSKENSPPRHTSLSYGGSRV. Over residues 802–814 the composition is skewed to polar residues; sequence KENSPPRHTSLSY.

Belongs to the FAM135 family.

In Mus musculus (Mouse), this protein is Protein FAM135B (Fam135b).